The following is a 283-amino-acid chain: Protein/nucleic acid deglycase HchA (283 aa).

3 residues coordinate Zn(2+): H86, E91, and H123. C185 (nucleophile) is an active-site residue.

Belongs to the peptidase C56 family. HchA subfamily. In terms of assembly, homodimer.

The protein localises to the cytoplasm. It carries out the reaction N(omega)-(1-hydroxy-2-oxopropyl)-L-arginyl-[protein] + H2O = lactate + L-arginyl-[protein] + H(+). The catalysed reaction is N(6)-(1-hydroxy-2-oxopropyl)-L-lysyl-[protein] + H2O = lactate + L-lysyl-[protein] + H(+). The enzyme catalyses S-(1-hydroxy-2-oxopropyl)-L-cysteinyl-[protein] + H2O = lactate + L-cysteinyl-[protein] + H(+). It catalyses the reaction N(omega)-(1-hydroxy-2-oxoethyl)-L-arginyl-[protein] + H2O = L-arginyl-[protein] + glycolate + H(+). It carries out the reaction N(6)-(1-hydroxy-2-oxoethyl)-L-lysyl-[protein] + H2O = glycolate + L-lysyl-[protein] + H(+). The catalysed reaction is S-(1-hydroxy-2-oxoethyl)-L-cysteinyl-[protein] + H2O = glycolate + L-cysteinyl-[protein] + H(+). The enzyme catalyses N(2)-(1-hydroxy-2-oxopropyl)-dGTP + H2O = lactate + dGTP + H(+). It catalyses the reaction N(2)-(1-hydroxy-2-oxopropyl)-GTP + H2O = lactate + GTP + H(+). It carries out the reaction N(2)-(1-hydroxy-2-oxopropyl)-GDP + H2O = lactate + GDP + H(+). The catalysed reaction is N(2)-(1-hydroxy-2-oxopropyl)-GMP + H2O = lactate + GMP + H(+). The enzyme catalyses N(2)-(1-hydroxy-2-oxoethyl)-dGTP + H2O = dGTP + glycolate + H(+). It catalyses the reaction N(2)-(1-hydroxy-2-oxoethyl)-GTP + H2O = glycolate + GTP + H(+). It carries out the reaction N(2)-(1-hydroxy-2-oxoethyl)-GDP + H2O = glycolate + GDP + H(+). The catalysed reaction is N(2)-(1-hydroxy-2-oxoethyl)-GMP + H2O = glycolate + GMP + H(+). The enzyme catalyses an N(2)-(1-hydroxy-2-oxopropyl)-guanosine in RNA + H2O = a guanosine in RNA + lactate + H(+). It catalyses the reaction an N(2)-(1-hydroxy-2-oxopropyl)-2'-deoxyguanosine in DNA + H2O = a 2'-deoxyguanosine in DNA + lactate + H(+). It carries out the reaction an N(2)-(1-hydroxy-2-oxoethyl)-guanosine in RNA + H2O = a guanosine in RNA + glycolate + H(+). The catalysed reaction is an N(2)-(1-hydroxy-2-oxoethyl)-2'-deoxyguanosine in DNA + H2O = a 2'-deoxyguanosine in DNA + glycolate + H(+). Functionally, protein and nucleotide deglycase that catalyzes the deglycation of the Maillard adducts formed between amino groups of proteins or nucleotides and reactive carbonyl groups of glyoxals. Thus, functions as a protein deglycase that repairs methylglyoxal- and glyoxal-glycated proteins, and releases repaired proteins and lactate or glycolate, respectively. Deglycates cysteine, arginine and lysine residues in proteins, and thus reactivates these proteins by reversing glycation by glyoxals. Acts on early glycation intermediates (hemithioacetals and aminocarbinols), preventing the formation of Schiff bases and advanced glycation endproducts (AGE). Also functions as a nucleotide deglycase able to repair glycated guanine in the free nucleotide pool (GTP, GDP, GMP, dGTP) and in DNA and RNA. Is thus involved in a major nucleotide repair system named guanine glycation repair (GG repair), dedicated to reversing methylglyoxal and glyoxal damage via nucleotide sanitization and direct nucleic acid repair. Plays an important role in protecting cells from carbonyl stress. The polypeptide is Protein/nucleic acid deglycase HchA (Escherichia coli O139:H28 (strain E24377A / ETEC)).